The sequence spans 69 residues: Fungal defensin oryzeasin (69 aa).

Positions 1 to 18 (MKLLTVAFSLLLLGQVHA) are cleaved as a signal peptide. A propeptide spanning residues 19–26 (SPLVLDKR) is cleaved from the precursor. Cystine bridges form between cysteine 29–cysteine 60, cysteine 44–cysteine 66, and cysteine 48–cysteine 68.

The protein belongs to the invertebrate defensin family.

The protein localises to the secreted. Its subcellular location is the target cell membrane. Its function is as follows. Shows antibacterial activity against numerous Gram-positive bacteria. It selectively inhibits peptidoglycan biosynthesis through complex formation with the cell wall precursor lipid II (1:1 molar ratio) thus inhibiting cell wall synthesis. This Aspergillus oryzae (strain ATCC 42149 / RIB 40) (Yellow koji mold) protein is Fungal defensin oryzeasin.